The chain runs to 144 residues: Large ribosomal subunit protein uL24 (144 aa).

The interval 1–22 is disordered; it reads MKFNKMVSSDRGKNRKRHFNAP. A compositionally biased stretch (basic residues) spans 13–22; that stretch reads KNRKRHFNAP.

Belongs to the universal ribosomal protein uL24 family.

The chain is Large ribosomal subunit protein uL24 (RPL26) from Littorina littorea (Common periwinkle).